We begin with the raw amino-acid sequence, 286 residues long: Probable aquaporin-3 (286 aa).

Positions 1–34 (MADTYGMNGHNGHVKDRRSSSMNGRNRLYAQQEP) are disordered. The Cytoplasmic portion of the chain corresponds to 1–52 (MADTYGMNGHNGHVKDRRSSSMNGRNRLYAQQEPQRTTHLSEFGKHMVAASG). Residues 53–73 (EFVGTFLFLYFGYAGNIVAVL) traverse the membrane as a helical segment. Residues 74 to 87 (QEPISGPNGTLANN) lie on the Extracellular side of the membrane. Residues asparagine 81 and asparagine 86 are each glycosylated (N-linked (GlcNAc...) asparagine). A helical transmembrane segment spans residues 88–108 (TVMYIAMAYGFSLLVNVWTFY). The Cytoplasmic portion of the chain corresponds to 109–135 (RISGGLFNPAVTFGLCLSGQLPWIRAL). An NPA 1 motif is present at residues 116–118 (NPA). A helical transmembrane segment spans residues 136-156 (FLFPSQIIAAMCAGGLVNAMF). Residues 157–175 (PGSASIANTTLGPNTSIAQ) lie on the Extracellular side of the membrane. N-linked (GlcNAc...) asparagine glycans are attached at residues asparagine 164 and asparagine 170. Residues 176–196 (GVFLEMFFTAQLVFVVLMLAA) form a helical membrane-spanning segment. At 197–202 (EKSRDT) the chain is on the cytoplasmic side. The helical transmembrane segment at 203-223 (FLAPVGIGLALFVALIPGVFV) threads the bilayer. The Extracellular portion of the chain corresponds to 224–244 (TGGSANPVRSFGCAVGSRDFP). The NPA 2 motif lies at 229-231 (NPV). The chain crosses the membrane as a helical span at residues 245 to 265 (GYHWIYWVGPLLGAALAAGYF). At 266 to 286 (RLVKMMHYEEANPGQDSPVDV) the chain is on the cytoplasmic side.

The protein belongs to the MIP/aquaporin (TC 1.A.8) family.

The protein localises to the membrane. The catalysed reaction is H2O(in) = H2O(out). Its function is as follows. Probable water channel that may have redundant functions with FgAQP5. The chain is Probable aquaporin-3 from Gibberella zeae (strain ATCC MYA-4620 / CBS 123657 / FGSC 9075 / NRRL 31084 / PH-1) (Wheat head blight fungus).